The sequence spans 360 residues: 4-hydroxy-3-methylbut-2-en-1-yl diphosphate synthase (flavodoxin) (360 aa).

Residues Cys265, Cys268, Cys300, and Glu307 each coordinate [4Fe-4S] cluster.

This sequence belongs to the IspG family. The cofactor is [4Fe-4S] cluster.

It catalyses the reaction (2E)-4-hydroxy-3-methylbut-2-enyl diphosphate + oxidized [flavodoxin] + H2O + 2 H(+) = 2-C-methyl-D-erythritol 2,4-cyclic diphosphate + reduced [flavodoxin]. It functions in the pathway isoprenoid biosynthesis; isopentenyl diphosphate biosynthesis via DXP pathway; isopentenyl diphosphate from 1-deoxy-D-xylulose 5-phosphate: step 5/6. In terms of biological role, converts 2C-methyl-D-erythritol 2,4-cyclodiphosphate (ME-2,4cPP) into 1-hydroxy-2-methyl-2-(E)-butenyl 4-diphosphate. The polypeptide is 4-hydroxy-3-methylbut-2-en-1-yl diphosphate synthase (flavodoxin) (Brevibacillus brevis (strain 47 / JCM 6285 / NBRC 100599)).